The following is a 636-amino-acid chain: Probable potassium transport system protein Kup (636 aa).

12 helical membrane passes run 23–43 (MALM…SPLY), 57–77 (PAHV…VVSL), 111–131 (WLLI…SMIT), 148–168 (HTLE…LFAI), 179–199 (LFGP…GYQI), 217–237 (FIAE…LALT), 258–278 (WFAM…ALLL), 287–307 (PFFL…ATVA), 348–368 (IYLP…VLLF), 377–397 (AYGF…FAVL), 409–429 (WMVL…ANIF), and 431–451 (IHEG…LMMT).

This sequence belongs to the HAK/KUP transporter (TC 2.A.72) family.

It is found in the cell inner membrane. The enzyme catalyses K(+)(in) + H(+)(in) = K(+)(out) + H(+)(out). Transport of potassium into the cell. Likely operates as a K(+):H(+) symporter. This chain is Probable potassium transport system protein Kup, found in Bordetella bronchiseptica (strain ATCC BAA-588 / NCTC 13252 / RB50) (Alcaligenes bronchisepticus).